The following is a 563-amino-acid chain: Tripeptidyl-peptidase 1 (563 aa).

A signal peptide spans 1-19 (MRLRTCLLGLLALCVASKC). Positions 20–195 (SYSPEPDQQR…PEPQVSGTVG (176 aa)) are cleaved as a propeptide — removed in mature form. A disulfide bridge connects residues cysteine 111 and cysteine 122. In terms of domain architecture, Peptidase S53 spans 199 to 563 (GVTPSVIRQR…PALLKALIKP (365 aa)). N-linked (GlcNAc...) asparagine glycans are attached at residues asparagine 210 and asparagine 222. Active-site charge relay system residues include glutamate 272 and aspartate 276. N-linked (GlcNAc...) asparagine glycosylation is found at asparagine 286, asparagine 313, and asparagine 443. 2 disulfides stabilise this stretch: cysteine 365–cysteine 526 and cysteine 522–cysteine 537. The active-site Charge relay system is the serine 475. Residues aspartate 517 and valine 518 each contribute to the Ca(2+) site. The Ca(2+) site is built by glycine 539, glycine 541, and aspartate 543.

Monomer. Interacts with CLN5. Interacts with CLN3. Ca(2+) is required as a cofactor. Activated by autocatalytic proteolytical processing upon acidification. N-glycosylation is required for processing and activity.

The protein resides in the lysosome. Its subcellular location is the melanosome. The enzyme catalyses Release of an N-terminal tripeptide from a polypeptide, but also has endopeptidase activity.. In terms of biological role, lysosomal serine protease with tripeptidyl-peptidase I activity. May act as a non-specific lysosomal peptidase which generates tripeptides from the breakdown products produced by lysosomal proteinases. Requires substrates with an unsubstituted N-terminus. The sequence is that of Tripeptidyl-peptidase 1 (TPP1) from Canis lupus familiaris (Dog).